The sequence spans 384 residues: MTENTSHRIMIVAGEASGDLHGAGLVREALRLDPTLSFFGIGGPRMREAGVETLVDSSEMAVVGIVEVLAHIGVISRAFMTLRQVIVSNPPDLLILIDYPDFNMLLARVARRHGVKVLYYISPQVWAWRTGRVKTIGRLVDRMAVVFPFEVPFYERAGVPVSFVGHPLADRVRPTMGRDEALASFGLDPGRRVVGLFPGSRRGEIAKLFPVILESAQQLRERYPDIQFILPLASSLTDGDIAPLLAASGLDVTVTQDRVYDVMQVCDAIITVSGTVTLEIALMGVPMVIIYKVSPLTYQVGKRLIRVDHIGICNIVAGERVVPELIQDDASADRIAAEIGRYLDDPAYAEKTRAGLAMVKEKLGTGGCSERVAGIVLEMLGKQV.

This sequence belongs to the LpxB family.

The catalysed reaction is a lipid X + a UDP-2-N,3-O-bis[(3R)-3-hydroxyacyl]-alpha-D-glucosamine = a lipid A disaccharide + UDP + H(+). It participates in bacterial outer membrane biogenesis; LPS lipid A biosynthesis. Functionally, condensation of UDP-2,3-diacylglucosamine and 2,3-diacylglucosamine-1-phosphate to form lipid A disaccharide, a precursor of lipid A, a phosphorylated glycolipid that anchors the lipopolysaccharide to the outer membrane of the cell. The polypeptide is Lipid-A-disaccharide synthase (Geobacter sulfurreducens (strain ATCC 51573 / DSM 12127 / PCA)).